The following is a 285-amino-acid chain: (3S)-malyl-CoA thioesterase (285 aa).

Substrate is bound by residues Arg70 and Glu122. Mg(2+) is bound by residues Glu122 and Asp148.

It belongs to the HpcH/HpaI aldolase family. In terms of assembly, homodimer or homotrimer. Mg(2+) serves as cofactor.

The enzyme catalyses (S)-malyl-CoA + H2O = (S)-malate + CoA + H(+). Its function is as follows. Catalyzes the hydrolysis of (3S)-malyl-CoA to (3S)-malate and free CoA. Inactive towards beta-methylmalyl-CoA and other CoA esters. The polypeptide is (3S)-malyl-CoA thioesterase (Cereibacter sphaeroides (strain ATCC 17029 / ATH 2.4.9) (Rhodobacter sphaeroides)).